Reading from the N-terminus, the 353-residue chain is Peroxisome assembly protein 12-B (353 aa).

Residues 1 to 19 lie on the Peroxisomal matrix side of the membrane; that stretch reads MAERGAHITTTSPLDDRPS. The helical transmembrane segment at 20-47 threads the bilayer; the sequence is IFEVVAQESLMAAARPALHHIVKVLAES. The Cytoplasmic portion of the chain corresponds to 48–51; the sequence is NPAR. Residues 52 to 76 form a helical membrane-spanning segment; it reads YGTLWRWFDELYTLLECLLQQHYLS. The Peroxisomal matrix portion of the chain corresponds to 77 to 104; that stretch reads WASASFSENFYGLKRVTLGKQVGQRNLA. A helical transmembrane segment spans residues 105–134; that stretch reads RKEYWKSLLLLVLIPYLRIKLEKLVNSLRE. Over 135 to 139 the chain is Cytoplasmic; it reads EEDYS. Residues 140 to 178 traverse the membrane as a helical segment; that stretch reads IQNPTSFHKRCYKAILASYPFLKLGWEAWFLFYQLRYIL. Residues 179-243 are Peroxisomal matrix-facing; it reads WNGKHHSPLL…LGAVTLSVSS (65 aa). A helical membrane pass occupies residues 244–271; it reads SLSLGVFFLQFLDWWYSAENRETLKSLG. Residues 272–353 lie on the Cytoplasmic side of the membrane; sequence NLPVPPPPIH…HLIKLYTPDG (82 aa). Cys-298, Cys-301, Cys-319, and Cys-322 together coordinate Zn(2+). The segment at 298 to 337 adopts an RING-type; degenerate zinc-finger fold; sequence CPLCRKVRVNDTALGTSGYVFCYRCAYYYVKTHQRCPVSG.

It belongs to the pex2/pex10/pex12 family. Component of the PEX2-PEX10-PEX12 retrotranslocation channel.

The protein localises to the peroxisome membrane. The protein operates within protein modification; protein ubiquitination. In terms of biological role, component of a retrotranslocation channel required for peroxisome organization by mediating export of the PEX5 receptor from peroxisomes to the cytosol, thereby promoting PEX5 recycling. The retrotranslocation channel is composed of PEX2, PEX10 and PEX12; each subunit contributing transmembrane segments that coassemble into an open channel that specifically allows the passage of PEX5 through the peroxisomal membrane. PEX12 also regulates PEX5 recycling by activating the E3 ubiquitin-protein ligase activity of PEX10. When PEX5 recycling is compromised, PEX12 stimulates PEX10-mediated polyubiquitination of PEX5, leading to its subsequent degradation. The sequence is that of Peroxisome assembly protein 12-B from Xenopus laevis (African clawed frog).